A 479-amino-acid chain; its full sequence is tRNA-2-methylthio-N(6)-dimethylallyladenosine synthase (479 aa).

Positions 6–122 constitute an MTTase N-terminal domain; the sequence is KTVYIKTVGC…IPDMLTKVTS (117 aa). [4Fe-4S] cluster is bound by residues Cys-15, Cys-51, Cys-85, Cys-172, Cys-176, and Cys-179. The 233-residue stretch at 158–390 folds into the Radical SAM core domain; that stretch reads RPTPFQAYLR…LAVQDRISKE (233 aa). In terms of domain architecture, TRAM spans 393-464; the sequence is QKLIGDTVEV…SHTLIGRVKT (72 aa).

It belongs to the methylthiotransferase family. MiaB subfamily. As to quaternary structure, monomer. [4Fe-4S] cluster is required as a cofactor.

Its subcellular location is the cytoplasm. The catalysed reaction is N(6)-dimethylallyladenosine(37) in tRNA + (sulfur carrier)-SH + AH2 + 2 S-adenosyl-L-methionine = 2-methylsulfanyl-N(6)-dimethylallyladenosine(37) in tRNA + (sulfur carrier)-H + 5'-deoxyadenosine + L-methionine + A + S-adenosyl-L-homocysteine + 2 H(+). Its function is as follows. Catalyzes the methylthiolation of N6-(dimethylallyl)adenosine (i(6)A), leading to the formation of 2-methylthio-N6-(dimethylallyl)adenosine (ms(2)i(6)A) at position 37 in tRNAs that read codons beginning with uridine. This is tRNA-2-methylthio-N(6)-dimethylallyladenosine synthase from Rhodopirellula baltica (strain DSM 10527 / NCIMB 13988 / SH1).